Here is a 487-residue protein sequence, read N- to C-terminus: V-type proton ATPase subunit B2 (487 aa).

An N-acetylglycine modification is found at Gly2.

The protein belongs to the ATPase alpha/beta chains family. In terms of assembly, V-ATPase is a heteromultimeric enzyme composed of a peripheral catalytic V1 complex (components A to H) attached to an integral membrane V0 proton pore complex (components: a, c, c'', d and e).

The protein resides in the vacuole membrane. Non-catalytic subunit of the peripheral V1 complex of vacuolar ATPase. V-ATPase is responsible for acidifying a variety of intracellular compartments in eukaryotic cells. This is V-type proton ATPase subunit B2 (VHA-B2) from Arabidopsis thaliana (Mouse-ear cress).